A 130-amino-acid chain; its full sequence is Small ribosomal subunit protein uS9 (130 aa).

Positions 109–130 (RKKERKKYGQPGARAKFQYSKR) are disordered.

It belongs to the universal ribosomal protein uS9 family.

This Maridesulfovibrio salexigens (strain ATCC 14822 / DSM 2638 / NCIMB 8403 / VKM B-1763) (Desulfovibrio salexigens) protein is Small ribosomal subunit protein uS9.